The following is a 132-amino-acid chain: Protein NrdI (132 aa).

The protein belongs to the NrdI family.

Its function is as follows. Probably involved in ribonucleotide reductase function. The polypeptide is Protein NrdI (Staphylococcus aureus (strain Mu3 / ATCC 700698)).